An 89-amino-acid polypeptide reads, in one-letter code: Small ribosomal subunit protein uS14 (89 aa).

The protein belongs to the universal ribosomal protein uS14 family. Part of the 30S ribosomal subunit. Contacts proteins S3 and S10.

Binds 16S rRNA, required for the assembly of 30S particles and may also be responsible for determining the conformation of the 16S rRNA at the A site. This Acholeplasma laidlawii (strain PG-8A) protein is Small ribosomal subunit protein uS14.